A 1556-amino-acid polypeptide reads, in one-letter code: Disco-interacting protein 2 homolog C (1556 aa).

The DMAP1-binding domain occupies 7–120 (EGMALPLEVR…PMPSKRRSLV (114 aa)). Disordered stretches follow at residues 47-157 (YLPQ…SQGS) and 170-189 (GSTTSTTSSSSTQSGGSGAA). The span at 81-93 (GSRDERYRSDVHT) shows a compositional bias: basic and acidic residues. Polar residues-rich tracts occupy residues 120–136 (VVQTSMDAYTPPDTSSG) and 144–157 (QGDSQGTPTSSQGS). Residues 170 to 183 (GSTTSTTSSSSTQS) show a composition bias toward low complexity. Residue Thr-264 is modified to Phosphothreonine.

Belongs to the DIP2 family.

The sequence is that of Disco-interacting protein 2 homolog C (DIP2C) from Homo sapiens (Human).